Consider the following 636-residue polypeptide: Cysteine-rich receptor-like protein kinase 24 (636 aa).

The first 20 residues, 1–20 (MVKFLVIFWFVVISFSHVSA), serve as a signal peptide directing secretion. Gnk2-homologous domains are found at residues 21–124 (QVCL…NRSF) and 130–235 (MEIL…LYPF). The Extracellular portion of the chain corresponds to 21–254 (QVCLERSGFF…RQKDGKSIST (234 aa)). N-linked (GlcNAc...) asparagine glycosylation is found at N33, N50, N98, N101, N121, N137, N145, and N197. A helical transmembrane segment spans residues 255–275 (GAIVAIIVVPILLLALGVGLW). Residues 276-636 (KRRKAYKTKT…SVSVTCVSPR (361 aa)) are Cytoplasmic-facing. The Protein kinase domain maps to 312–585 (FHNVNKLGHG…TMSTVFHMLT (274 aa)). ATP contacts are provided by residues 318–326 (LGHGGFGEV) and K340. D437 functions as the Proton acceptor in the catalytic mechanism.

Belongs to the protein kinase superfamily. Ser/Thr protein kinase family. CRK subfamily.

The protein localises to the membrane. It carries out the reaction L-seryl-[protein] + ATP = O-phospho-L-seryl-[protein] + ADP + H(+). The enzyme catalyses L-threonyl-[protein] + ATP = O-phospho-L-threonyl-[protein] + ADP + H(+). This Arabidopsis thaliana (Mouse-ear cress) protein is Cysteine-rich receptor-like protein kinase 24 (CRK24).